A 432-amino-acid chain; its full sequence is C(50) beta-cyclic carotenoids biosynthesis protein LbtBC (432 aa).

The interval 1–140 (MTSLYTTLNL…DDDEVRTPER (140 aa)) is beta-cyclase. The next 3 membrane-spanning stretches (helical) occupy residues 4–24 (LYTTLNLTMSIPVVAVALLAA), 36–56 (LIGVGGALLILMILTAVFDNI), and 83–103 (FAYAVAAAVFVPSVWALLTAS). Positions 111–140 (GSPTVSGRGDALLTRAPEPGDDDEVRTPER) are disordered. The elongase/hydratase stretch occupies residues 141-432 (PGTPGLLTTL…IVLWSVLVWS (292 aa)). Transmembrane regions (helical) follow at residues 170-190 (YFLATGGFDLVGVIGTIFFLV), 252-272 (ESSLWLAASAFAVIAYSAKGL), 277-297 (IPFLDSLTSAFHFVSPAIVGW), 299-319 (IAGAELTGGVWACLIAFMLWG), 350-370 (AAVWFALACYVAAVVVLLAAA), 374-394 (ASGAAFAILPYLATVAAYVGV), and 409-429 (FLVLNMLAGFCVTQIVLWSVL).

The protein belongs to the UbiA prenyltransferase family. As to quaternary structure, may form a complex with LbtA.

It localises to the cell membrane. It carries out the reaction all-trans-lycopene + dimethylallyl diphosphate + H2O = dihydroisopentenyldehydrorhodopin + diphosphate. The enzyme catalyses isopentenyldehydrorhodopin + dimethylallyl diphosphate + H2O = dihydrobisanhydrobacterioruberin + diphosphate. It participates in carotenoid biosynthesis. Functionally, involved in the biosynthesis of C(50) beta-cyclic carotenoids. The elongase/hydratase domain catalyzes the elongation of lycopene by attaching a C(5) isoprene unit at C-2, as well as the hydroxylation of the previous end of the molecule. The enzyme acts at both ends of the substrate, and catalyzes the conversion of lycopene to the C(45) intermediate dihydroisopentenyldehydrorhodopin (DH-IDR) and the conversion of isopentenyldehydrorhodopin (IDR) to the C(50) carotenoid dihydrobisanhydrobacterioruberin (DH-BABR). The beta-cyclase domain may produce the C(50) beta-cyclic carotenoid C.p.450 from the C(50) carotenoid dihydrobisanhydrobacterioruberin (DH-BABR). This is C(50) beta-cyclic carotenoids biosynthesis protein LbtBC from Dietzia sp. (strain CQ4).